Reading from the N-terminus, the 101-residue chain is Small ribosomal subunit protein bS18c (101 aa).

Residues 1 to 19 show a composition bias toward basic residues; sequence MDKSKQPFRKSKRSFRRRL. The segment at 1-24 is disordered; the sequence is MDKSKQPFRKSKRSFRRRLPPIGS.

Belongs to the bacterial ribosomal protein bS18 family. In terms of assembly, part of the 30S ribosomal subunit.

The protein localises to the plastid. Its subcellular location is the chloroplast. The protein is Small ribosomal subunit protein bS18c of Amborella trichopoda.